Here is a 513-residue protein sequence, read N- to C-terminus: ATP synthase subunit alpha (513 aa).

Position 169 to 176 (169 to 176 (GDRQTGKT)) interacts with ATP.

Belongs to the ATPase alpha/beta chains family. In terms of assembly, F-type ATPases have 2 components, CF(1) - the catalytic core - and CF(0) - the membrane proton channel. CF(1) has five subunits: alpha(3), beta(3), gamma(1), delta(1), epsilon(1). CF(0) has three main subunits: a(1), b(2) and c(9-12). The alpha and beta chains form an alternating ring which encloses part of the gamma chain. CF(1) is attached to CF(0) by a central stalk formed by the gamma and epsilon chains, while a peripheral stalk is formed by the delta and b chains.

The protein resides in the cell inner membrane. The enzyme catalyses ATP + H2O + 4 H(+)(in) = ADP + phosphate + 5 H(+)(out). Its function is as follows. Produces ATP from ADP in the presence of a proton gradient across the membrane. The alpha chain is a regulatory subunit. This Idiomarina loihiensis (strain ATCC BAA-735 / DSM 15497 / L2-TR) protein is ATP synthase subunit alpha.